The sequence spans 750 residues: Photosystem I P700 chlorophyll a apoprotein A1 (750 aa).

Transmembrane regions (helical) follow at residues 70–93 (VFSA…FHGA), 156–179 (LYCT…FHYH), 195–219 (LNHH…HVSL), 291–309 (TAHH…GHMY), 346–369 (WHAQ…HHMY), 385–411 (LSLF…IFMV), 433–455 (AIIS…LYIH), and 531–549 (FLVH…LILL). [4Fe-4S] cluster is bound by residues Cys573 and Cys582. The next 2 membrane-spanning stretches (helical) occupy residues 589-610 (HVFL…HFSW) and 664-686 (LSAY…MFLF). Residue His675 participates in chlorophyll a' binding. Positions 683 and 691 each coordinate chlorophyll a. Trp692 is a phylloquinone binding site. Residues 724 to 744 (AVGVAHYLLGGIATTWAFFLA) traverse the membrane as a helical segment.

The protein belongs to the PsaA/PsaB family. As to quaternary structure, the PsaA/B heterodimer binds the P700 chlorophyll special pair and subsequent electron acceptors. PSI consists of a core antenna complex that captures photons, and an electron transfer chain that converts photonic excitation into a charge separation. The eukaryotic PSI reaction center is composed of at least 11 subunits. It depends on P700 is a chlorophyll a/chlorophyll a' dimer, A0 is one or more chlorophyll a, A1 is one or both phylloquinones and FX is a shared 4Fe-4S iron-sulfur center. as a cofactor.

The protein resides in the plastid. Its subcellular location is the chloroplast thylakoid membrane. The enzyme catalyses reduced [plastocyanin] + hnu + oxidized [2Fe-2S]-[ferredoxin] = oxidized [plastocyanin] + reduced [2Fe-2S]-[ferredoxin]. In terms of biological role, psaA and PsaB bind P700, the primary electron donor of photosystem I (PSI), as well as the electron acceptors A0, A1 and FX. PSI is a plastocyanin-ferredoxin oxidoreductase, converting photonic excitation into a charge separation, which transfers an electron from the donor P700 chlorophyll pair to the spectroscopically characterized acceptors A0, A1, FX, FA and FB in turn. Oxidized P700 is reduced on the lumenal side of the thylakoid membrane by plastocyanin. This is Photosystem I P700 chlorophyll a apoprotein A1 from Angiopteris evecta (Mule's foot fern).